An 80-amino-acid chain; its full sequence is Spermatid-specific protein S2 (80 aa).

Residues 1-36 show a composition bias toward basic residues; that stretch reads VKSRYHQRQYRARKRYAKARRTKKPKRRPKPPRKLR. Residues 1 to 44 form a disordered region; sequence VKSRYHQRQYRARKRYAKARRTKKPKRRPKPPRKLRYAPSKKQP.

Its subcellular location is the nucleus. The protein localises to the chromosome. Involved in nuclear basic protein transition: histones are replaced by spermatid specific proteins which are themselves replaced by protamines in late spermatids. The protein is Spermatid-specific protein S2 of Scyliorhinus canicula (Small-spotted catshark).